The primary structure comprises 549 residues: MMCLECASAAAGGAEEEEADAERRRRRRGAQPGAGGSACCGARGVGGAGVVSADEEVQTLSGSVRRVPSGLPSIPSTPGCAAAAKGPSAPQPKPASLGRGRGAAAAILSLGNVLNYLDRYTVAGVLLDIQQHFGVKDRGAGLLQSVFICSFMVAAPIFGYLGDRFNRKVILSCGIFFWSAVTFSSSFIPQQYFWLLVLSRGLVGIGEASYSTIAPTIIGDLFTKNTRTLMLSVFYFAIPLGSGLGYITGSSVKQAAGDWHWALRVSPVLGMITGTLILILVPATKRGHADQLGGQLKARTSWLRDMKALIRNRSYVFSSLATSAVSFATGALGMWIPLYLHRAQVVQKTAETCNSPPCGAKDSLIFGAITCFTGFLGVVTGAGATRWCRLRTQRADPLVCAVGMLGSAIFICLIFVAAKTSIVGAYICIFVGETLLFSNWAITADILMYVVIPTRRATAVALQSFTSHLLGDAGSPYLIGFISDLIRQSTKDSPLWEFLSLGYALMLCPFVVVLGGMFFLATALFFLSDRAKAEQQVNQLVMPPASVKV.

2 disordered regions span residues 14 to 36 (AEEE…GAGG) and 78 to 97 (PGCA…PASL). The next 11 helical transmembrane spans lie at 141 to 161 (GLLQ…FGYL), 169 to 189 (VILS…SFIP), 202 to 222 (LVGI…GDLF), 229 to 249 (LMLS…YITG), 261 to 281 (WALR…LILV), 320 to 340 (LATS…PLYL), 364 to 384 (LIFG…GAGA), 398 to 418 (LVCA…FVAA), 422 to 442 (IVGA…NWAI), 466 to 486 (TSHL…SDLI), and 507 to 527 (LCPF…LFFL).

This sequence belongs to the major facilitator superfamily. Spinster (TC 2.A.1.49) family. Expression is high in the lungs and liver, low in the lymph nodes, spleen and bone marrow, and very low but detectable in the thymus. Not expressed in red blood cells. Also expressed in the inner ear: expressed in the cochlea, both in the lateral wall and organ of Corti.

The protein localises to the cell membrane. Its subcellular location is the endosome membrane. The catalysed reaction is sphing-4-enine 1-phosphate(in) = sphing-4-enine 1-phosphate(out). It carries out the reaction sphinganine 1-phosphate(in) = sphinganine 1-phosphate(out). Its function is as follows. Lipid transporter that specifically mediates export of sphingosine-1-phosphate (sphing-4-enine 1-phosphate, S1P) and sphinganine-1-phosphate in the lymph, thereby playing a role in lymphocyte trafficking. S1P is a bioactive signaling molecule that regulates many physiological processes important for the development and for the immune system. Regulates levels of S1P and the S1P gradient that exists between the high circulating concentrations of S1P and low tissue levels that control lymphocyte trafficking. Required for the egress of T-cells from lymph nodes during an immune response by mediating S1P secretion, which generates a gradient that enables activated T-cells to access lymph. Also required for the egress of immature B-cells from the bone marrow. In contrast, it does not mediate S1P release from red blood cells. Involved in auditory function: S1P release in the inner ear is required for maintenance of the endocochlear potential in the cochlea. In addition to export, also able to mediate S1P import. The polypeptide is Sphingosine-1-phosphate transporter SPNS2 (Mus musculus (Mouse)).